A 491-amino-acid chain; its full sequence is ATP synthase subunit beta, chloroplastic (491 aa).

ATP is bound at residue 163-170; the sequence is GGAGVGKT.

This sequence belongs to the ATPase alpha/beta chains family. In terms of assembly, F-type ATPases have 2 components, CF(1) - the catalytic core - and CF(0) - the membrane proton channel. CF(1) has five subunits: alpha(3), beta(3), gamma(1), delta(1), epsilon(1). CF(0) has four main subunits: a(1), b(1), b'(1) and c(9-12).

The protein localises to the plastid. It is found in the chloroplast thylakoid membrane. It carries out the reaction ATP + H2O + 4 H(+)(in) = ADP + phosphate + 5 H(+)(out). Its function is as follows. Produces ATP from ADP in the presence of a proton gradient across the membrane. The catalytic sites are hosted primarily by the beta subunits. This Nephroselmis olivacea (Green alga) protein is ATP synthase subunit beta, chloroplastic.